The following is a 366-amino-acid chain: Growth hormone secretagogue receptor type 1 (366 aa).

Residues 1-40 (MWNATPSEEPGPNLTLPDLGWDAPPENDSLVEELLPLFPT) lie on the Extracellular side of the membrane. N-linked (GlcNAc...) asparagine glycosylation is found at N13 and N27. A helical transmembrane segment spans residues 41-66 (PLLAGVTATCVALFVVGIAGNLLTML). Over 67–72 (VVSRFR) the chain is Cytoplasmic. The chain crosses the membrane as a helical span at residues 73–96 (EMRTTTNLYLSSMAFSDLLIFLCM). The Extracellular portion of the chain corresponds to 97–117 (PLDLFRLWQYRPWNLGNLLCK). A disulfide bridge connects residues C116 and C198. The chain crosses the membrane as a helical span at residues 118–139 (LFQFVSESCTYATVLTITALSV). Over 140–162 (ERYFAICFPLRAKVVVTKGRVKL) the chain is Cytoplasmic. A helical membrane pass occupies residues 163-183 (VILVIWAVAFCSAGPIFVLVG). Topologically, residues 184 to 211 (VEHDNGTDPRDTNECRATEFAVRSGLLT) are extracellular. The helical transmembrane segment at 212–235 (VMVWVSSVFFFLPVFCLTVLYSLI) threads the bilayer. The Cytoplasmic portion of the chain corresponds to 236–263 (GRKLWRRKRGEAAVGSSLRDQNHKQTVK). Residues 264–285 (MLAVVVFAFILCWLPFHVGRYL) form a helical membrane-spanning segment. The Extracellular segment spans residues 286–302 (FSKSLEPGSVEIAQISQ). The chain crosses the membrane as a helical span at residues 303 to 326 (YCNLVSFVLFYLSAAINPILYNIM). The Cytoplasmic segment spans residues 327–366 (SKKYRVAVFKLLGFEPFSQRKLSTLKDESSRAWTESSINT).

It belongs to the G-protein coupled receptor 1 family. As to expression, pituitary and hypothalamus.

It localises to the cell membrane. Receptor for ghrelin, coupled to G-alpha-11 proteins. Stimulates growth hormone secretion. Also binds other growth hormone releasing peptides (GHRP) (e.g. Met-enkephalin and GHRP-6) as well as non-peptide, low molecular weight secretagogues (e.g. L-692,429, MK-0677, adenosine). The sequence is that of Growth hormone secretagogue receptor type 1 (GHSR) from Sus scrofa (Pig).